Consider the following 172-residue polypeptide: Small ribosomal subunit protein uS5 (172 aa).

Residues 16 to 79 (LKEKLVHINR…EDGKKNVIKV (64 aa)) enclose the S5 DRBM domain.

Belongs to the universal ribosomal protein uS5 family. Part of the 30S ribosomal subunit. Contacts proteins S4 and S8.

Functionally, with S4 and S12 plays an important role in translational accuracy. In terms of biological role, located at the back of the 30S subunit body where it stabilizes the conformation of the head with respect to the body. This is Small ribosomal subunit protein uS5 from Pelodictyon phaeoclathratiforme (strain DSM 5477 / BU-1).